Reading from the N-terminus, the 872-residue chain is G-type lectin S-receptor-like serine/threonine-protein kinase At5g35370 (872 aa).

The N-terminal stretch at 1 to 26 (MKSTFLLLLLLLSLNLLFVFVSCASS) is a signal peptide. At 27 to 443 (IEFVYPNFTA…NNNRGGSSFP (417 aa)) the chain is on the extracellular side. Residues N33, N148, and N239 are each glycosylated (N-linked (GlcNAc...) asparagine). The region spanning 35 to 156 (TASNLRFVDS…LNVSLWESFD (122 aa)) is the Bulb-type lectin domain. The 40-residue stretch at 283-322 (PMDSCQIPFVCGKLGLCNLDNASENQSCSCPDEMRMDAGK) folds into the EGF-like; atypical domain. 2 disulfides stabilise this stretch: C287-C299 and C293-C310. N-linked (GlcNAc...) asparagine glycans are attached at residues N303, N307, N342, N379, and N389. Residues 338–423 (CEARNISYLE…HDLIGYVKLS (86 aa)) enclose the PAN domain. Cystine bridges form between C372-C394 and C376-C382. The helical transmembrane segment at 444–464 (VIALVLLPCSGFFLLIALGLL) threads the bilayer. At 465 to 872 (WWRRCAVMRY…IASQEVSGPR (408 aa)) the chain is on the cytoplasmic side. In terms of domain architecture, Protein kinase spans 515–814 (ENFKMQIGSG…GSIPLGNPRM (300 aa)). Residues 521–529 (IGSGGFGSV) and K543 each bind ATP. The interval 603–620 (GNGPVLEWQERFDIALGT) is caM-binding. D639 serves as the catalytic Proton acceptor. The residue at position 656 (S656) is a Phosphoserine. T673 carries the post-translational modification Phosphothreonine. A phosphoserine mark is found at S716 and S859. The disordered stretch occupies residues 836–872 (QNGESETMVFHRRESSNSGGSRQSASYIASQEVSGPR). Over residues 851–861 (SNSGGSRQSAS) the composition is skewed to low complexity. Residues 862–872 (YIASQEVSGPR) are compositionally biased toward polar residues.

It belongs to the protein kinase superfamily. Ser/Thr protein kinase family.

Its subcellular location is the cell membrane. It carries out the reaction L-seryl-[protein] + ATP = O-phospho-L-seryl-[protein] + ADP + H(+). It catalyses the reaction L-threonyl-[protein] + ATP = O-phospho-L-threonyl-[protein] + ADP + H(+). The protein is G-type lectin S-receptor-like serine/threonine-protein kinase At5g35370 of Arabidopsis thaliana (Mouse-ear cress).